Here is a 635-residue protein sequence, read N- to C-terminus: ATP-binding protein Uup (635 aa).

2 ABC transporter domains span residues 1–253 (MSLI…RVEE) and 320–546 (FEME…KTEE). Residues 36–43 (GRNGAGKS) and 352–359 (GPNGCGKT) contribute to the ATP site. A C-terminal domain (CTD), binds DNA, required to complement a deletion mutant region spans residues 551–635 (KAETVKRSSS…EYLEALKNGG (85 aa)). A coiled-coil region spans residues 563-631 (SYKLQRELEQ…FERWEYLEAL (69 aa)).

This sequence belongs to the ABC transporter superfamily. ABCF family. Uup subfamily.

The protein localises to the cytoplasm. It carries out the reaction ATP + H2O = ADP + phosphate + H(+). ATPase activity inhibited by N-ethylmaleimide but not by vanadate. Probably plays a role in ribosome assembly or function; overexpression suppresses cold-sensitive growth of a bipA deletion. May be involved in resolution of branched DNA intermediates that result from template switching in postreplication gaps. Binds DNA at Holliday junctions. May be involved in the correct segregation of nucleoids. Has ATPase activity, binds DNA non-sequence specifically; the presence of DNA does not change the ATPase activity. Mutations in this gene cause an increase in RecA-independent precise excision of transposons and insertion elements, and also reduce bacteriophage Mu growth. Genetic interactions among priB, dam, lexA, nagC, polA, rdgB, rdgB, rep and uup link the PriA-PriB replication restart pathway to DNA double-strand break repair. The protein is ATP-binding protein Uup of Escherichia coli (strain K12).